A 224-amino-acid chain; its full sequence is uncharacterized protein (224 aa).

Residues N10, N70, and N74 are each glycosylated (N-linked (GlcNAc...) asparagine).

It localises to the endoplasmic reticulum. This is an uncharacterized protein from Saccharomyces cerevisiae (strain ATCC 204508 / S288c) (Baker's yeast).